The chain runs to 51 residues: Light-harvesting protein B800/850/890 beta-2 chain (51 aa).

Residues 1 to 17 are Cytoplasmic-facing; it reads ADEMRNVSDEEAKEFHA. Residues histidine 16 and histidine 34 each coordinate a bacteriochlorophyll. The helical transmembrane segment at 18 to 40 threads the bilayer; sequence MFSQAFTVYVGVAVVAHILAWAW. Residues 41 to 51 are Periplasmic-facing; the sequence is RPWIPGDEGFG.

This sequence belongs to the antenna complex beta subunit family. The core complex is formed by different alpha and beta chains, binding bacteriochlorophyll molecules, and arranged most probably in tetrameric structures disposed around the reaction center. The non-pigmented gamma chains may constitute additional components.

The protein resides in the cell inner membrane. Antenna complexes are light-harvesting systems, which transfer the excitation energy to the reaction centers. The protein is Light-harvesting protein B800/850/890 beta-2 chain of Halorhodospira halophila (strain DSM 244 / SL1) (Ectothiorhodospira halophila (strain DSM 244 / SL1)).